Reading from the N-terminus, the 424-residue chain is Enolase (424 aa).

(2R)-2-phosphoglycerate is bound at residue Gln162. Glu204 (proton donor) is an active-site residue. Mg(2+) is bound by residues Asp241, Glu284, and Asp311. The (2R)-2-phosphoglycerate site is built by Lys336, Arg365, Ser366, and Lys387. The active-site Proton acceptor is Lys336.

This sequence belongs to the enolase family. Requires Mg(2+) as cofactor.

It localises to the cytoplasm. It is found in the secreted. The protein localises to the cell surface. It carries out the reaction (2R)-2-phosphoglycerate = phosphoenolpyruvate + H2O. The protein operates within carbohydrate degradation; glycolysis; pyruvate from D-glyceraldehyde 3-phosphate: step 4/5. In terms of biological role, catalyzes the reversible conversion of 2-phosphoglycerate (2-PG) into phosphoenolpyruvate (PEP). It is essential for the degradation of carbohydrates via glycolysis. This Rhizobium leguminosarum bv. trifolii (strain WSM2304) protein is Enolase.